A 134-amino-acid chain; its full sequence is Large ribosomal subunit protein bL12 (134 aa).

The protein belongs to the bacterial ribosomal protein bL12 family. As to quaternary structure, homodimer. Part of the ribosomal stalk of the 50S ribosomal subunit. Forms a multimeric L10(L12)X complex, where L10 forms an elongated spine to which 2 to 4 L12 dimers bind in a sequential fashion. Binds GTP-bound translation factors.

In terms of biological role, forms part of the ribosomal stalk which helps the ribosome interact with GTP-bound translation factors. Is thus essential for accurate translation. In Anaplasma phagocytophilum (strain HZ), this protein is Large ribosomal subunit protein bL12.